A 123-amino-acid polypeptide reads, in one-letter code: Large ribosomal subunit protein bL12 (123 aa).

The protein belongs to the bacterial ribosomal protein bL12 family. Homodimer. Part of the ribosomal stalk of the 50S ribosomal subunit. Forms a multimeric L10(L12)X complex, where L10 forms an elongated spine to which 2 to 4 L12 dimers bind in a sequential fashion. Binds GTP-bound translation factors.

Forms part of the ribosomal stalk which helps the ribosome interact with GTP-bound translation factors. Is thus essential for accurate translation. The chain is Large ribosomal subunit protein bL12 from Acholeplasma laidlawii (strain PG-8A).